The sequence spans 698 residues: Elongation factor G 1 (698 aa).

Residues 8–290 (ERYRNIGICA…AVVEFLPAPV (283 aa)) form the tr-type G domain. GTP-binding positions include 17 to 24 (AHVDAGKT), 88 to 92 (DTPGH), and 142 to 145 (NKMD).

It belongs to the TRAFAC class translation factor GTPase superfamily. Classic translation factor GTPase family. EF-G/EF-2 subfamily.

Its subcellular location is the cytoplasm. Functionally, catalyzes the GTP-dependent ribosomal translocation step during translation elongation. During this step, the ribosome changes from the pre-translocational (PRE) to the post-translocational (POST) state as the newly formed A-site-bound peptidyl-tRNA and P-site-bound deacylated tRNA move to the P and E sites, respectively. Catalyzes the coordinated movement of the two tRNA molecules, the mRNA and conformational changes in the ribosome. This chain is Elongation factor G 1, found in Shewanella oneidensis (strain ATCC 700550 / JCM 31522 / CIP 106686 / LMG 19005 / NCIMB 14063 / MR-1).